Consider the following 264-residue polypeptide: Tryptophan synthase alpha chain (264 aa).

Active-site proton acceptor residues include Glu49 and Asp60.

This sequence belongs to the TrpA family. As to quaternary structure, tetramer of two alpha and two beta chains.

The catalysed reaction is (1S,2R)-1-C-(indol-3-yl)glycerol 3-phosphate + L-serine = D-glyceraldehyde 3-phosphate + L-tryptophan + H2O. It functions in the pathway amino-acid biosynthesis; L-tryptophan biosynthesis; L-tryptophan from chorismate: step 5/5. In terms of biological role, the alpha subunit is responsible for the aldol cleavage of indoleglycerol phosphate to indole and glyceraldehyde 3-phosphate. This chain is Tryptophan synthase alpha chain, found in Lachnospira eligens (strain ATCC 27750 / DSM 3376 / VPI C15-48 / C15-B4) (Eubacterium eligens).